Reading from the N-terminus, the 434-residue chain is F-box/LRR-repeat protein 21 (434 aa).

The F-box domain occupies 39 to 85 (RLDWGSLPHRVVLCVFQYLPLIDRARASSVCRRWNEVFHIPDLWRKF). 7 LRR repeats span residues 140–165 (LVNC…SKSH), 187–213 (DTPV…KMSS), 214–239 (CPHV…ALNY), 242–265 (LSDE…RIDV), 322–347 (GRSV…VVCA), 349–374 (GIQV…GLSE), and 375–400 (CEVS…SIME).

In terms of assembly, part of the SCF (SKP1-CUL1-F-box) E3 ubiquitin-protein ligase complex SCF(FBXL21) composed of CUL1, SKP1, RBX1 and FBXL21. Interacts with CRY2. Interacts with CRY1. Expressed in the adenohypophysis, hypothalamus (especially in the suprachiasmatic nucleus or nuclei, SCN) and pineal, all neuroendocrine structures associated with timing and homeostasis.

The protein resides in the cytoplasm. It is found in the cytosol. The protein localises to the nucleus. The protein operates within protein modification; protein ubiquitination. Substrate-recognition component of the SCF(FBXL21) E3 ubiquitin ligase complex involved in circadian rhythm function. Plays a key role in the maintenance of both the speed and the robustness of the circadian clock oscillation. The SCF(FBXL21) complex mainly acts in the cytosol and mediates ubiquitination of CRY proteins (CRY1 and CRY2), leading to CRY proteins stabilization. The SCF(FBXL21) complex counteracts the activity of the SCF(FBXL3) complex and protects CRY proteins from degradation. Involved in the hypothalamic suprachiasmatic nucleus (SCN) clock regulating temporal organization of the daily activities. This Ovis aries (Sheep) protein is F-box/LRR-repeat protein 21 (Fbxl21).